The following is a 256-amino-acid chain: UPF0246 protein Bpet1601 (256 aa).

It belongs to the UPF0246 family.

The polypeptide is UPF0246 protein Bpet1601 (Bordetella petrii (strain ATCC BAA-461 / DSM 12804 / CCUG 43448)).